Reading from the N-terminus, the 571-residue chain is Urease subunit alpha (571 aa).

In terms of domain architecture, Urease spans 133-571; that stretch reads GGIDTHVHFI…LPLTQRYFLF (439 aa). Residues His138, His140, and Lys221 each contribute to the Ni(2+) site. N6-carboxylysine is present on Lys221. Position 223 (His223) interacts with substrate. His250 and His276 together coordinate Ni(2+). His324 functions as the Proton donor in the catalytic mechanism. Residue Asp364 participates in Ni(2+) binding.

It belongs to the metallo-dependent hydrolases superfamily. Urease alpha subunit family. Heterotrimer of UreA (gamma), UreB (beta) and UreC (alpha) subunits. Three heterotrimers associate to form the active enzyme. It depends on Ni cation as a cofactor. Carboxylation allows a single lysine to coordinate two nickel ions.

It is found in the cytoplasm. The catalysed reaction is urea + 2 H2O + H(+) = hydrogencarbonate + 2 NH4(+). Its pathway is nitrogen metabolism; urea degradation; CO(2) and NH(3) from urea (urease route): step 1/1. This Staphylococcus epidermidis (strain ATCC 35984 / DSM 28319 / BCRC 17069 / CCUG 31568 / BM 3577 / RP62A) protein is Urease subunit alpha.